The sequence spans 333 residues: D-2-hydroxyacid dehydrogenase (NAD+) (333 aa).

4-methyl-2-oxopentanoate is bound at residue Tyr-100. His-155, Ile-156, Asp-175, Val-205, Asn-211, Thr-232, Arg-234, and Asp-258 together coordinate NAD(+). Arg-234 is an active-site residue. Glu-263 is an active-site residue. 4-methyl-2-oxopentanoate is bound at residue His-295. The active-site Proton donor is the His-295.

The protein belongs to the D-isomer specific 2-hydroxyacid dehydrogenase family. As to quaternary structure, homodimer.

The catalysed reaction is a (2R)-2-hydroxycarboxylate + NAD(+) = a 2-oxocarboxylate + NADH + H(+). It carries out the reaction (2R)-hydroxy-4-methylpentanoate + NAD(+) = 4-methyl-2-oxopentanoate + NADH + H(+). The enzyme catalyses (R)-3-phenyllactate + NAD(+) = 3-phenylpyruvate + NADH + H(+). Completely inhibited In the presence of 0.1 mM Hg(2+). No influence on the activity could be detected with Mg(2+) and Ca(2+) and only very weak effects with Cd(2+), Co(2+) and Mn(2+). Reducing agents and thiol group reagents do not affect catalytic activity. Functionally, catalyzes the NADH-dependent reversible reduction of various 2-ketocarboxylic acids to the corresponding D-2-hydroxycarboxylic acids. In vitro can use various substrates, including 4-methyl-2-oxopentanoate (2-oxoisocaproate), 2-oxopentanoate, 2-oxohexanoate and phenylpyruvate. The sequence is that of D-2-hydroxyacid dehydrogenase (NAD+) from Lacticaseibacillus paracasei (Lactobacillus paracasei).